A 328-amino-acid chain; its full sequence is GMP reductase (328 aa).

The Thioimidate intermediate role is filled by Cys-176. 205 to 228 contributes to the NADP(+) binding site; it reads IIADGGIRTHGDIAKSIRFGASMI.

It belongs to the IMPDH/GMPR family. GuaC type 2 subfamily.

The enzyme catalyses IMP + NH4(+) + NADP(+) = GMP + NADPH + 2 H(+). In terms of biological role, catalyzes the irreversible NADPH-dependent deamination of GMP to IMP. It functions in the conversion of nucleobase, nucleoside and nucleotide derivatives of G to A nucleotides, and in maintaining the intracellular balance of A and G nucleotides. The sequence is that of GMP reductase from Streptococcus pneumoniae (strain ATCC 700669 / Spain 23F-1).